Consider the following 437-residue polypeptide: Sodium/bile acid cotransporter 4 (437 aa).

The Extracellular portion of the chain corresponds to 1-103; sequence MDSLDNTTLL…PPFWDTPLNH (103 aa). N-linked (GlcNAc...) asparagine glycans are attached at residues N6 and N20. The disordered stretch occupies residues 15 to 79; the sequence is SLLPDNLTLS…SSSLTVGVAG (65 aa). A compositionally biased stretch (polar residues) spans 22-41; the sequence is TLSPNAGSPSASTLSPLAVT. A compositionally biased stretch (low complexity) spans 42–74; sequence SSPGPGLSLAPSPSIGFSPEATPTPEPTSSSLT. The helical transmembrane segment at 104 to 124 threads the bilayer; it reads GLNVFVGAALCITMLGLGCTV. Residues 125-140 are Cytoplasmic-facing; it reads DVNHFGAHVRRPVGAL. A helical membrane pass occupies residues 141-161; the sequence is LAALCQFGFLPLLAFLLALIF. Over 162–197 the chain is Extracellular; it reads KLDEVAAVAVLLCGCCPGGNLSNLMSLLVDGDMNLS. N-linked (GlcNAc...) asparagine glycosylation is found at N181 and N195. A helical membrane pass occupies residues 198 to 218; that stretch reads IIMTISSTLLALVLMPLCLWI. Residues 219 to 233 are Cytoplasmic-facing; that stretch reads YSRAWINTPLVQLLP. Residues 234–254 traverse the membrane as a helical segment; it reads LGAVTLTLCSTLIPIGLGVFI. The Extracellular portion of the chain corresponds to 255–267; the sequence is RYKYNRVADYIVK. The helical transmembrane segment at 268-288 threads the bilayer; it reads VSLWSLLVTLVVLFIMTGTML. Topologically, residues 289–291 are cytoplasmic; it reads GPE. Residues 292–312 form a helical membrane-spanning segment; it reads LLASIPATVYVVAIFMPLAGY. Topologically, residues 313 to 360 are extracellular; sequence ASGYGLATLFHLPPNCKRTVCLETGSQNVQLCTAILKLAFPPRFIGSM. The helical transmembrane segment at 361 to 381 threads the bilayer; it reads YMFPLLYALFQSAEAGVFVLI. Over 382–437 the chain is Cytoplasmic; that stretch reads YKMYGSEILHKREALDEDEDTDISYKKLKEEEMADTSYGTVGTDDLVMMETTQTAL.

The protein belongs to the bile acid:sodium symporter (BASS) (TC 2.A.28) family. In terms of processing, activated following N-terminal proteolytic cleavage by thrombin and/or proteases. In terms of tissue distribution, highest expression in the brain and significantly above background levels in the eye, prostate, and whole embryo tissue preparations.

The protein resides in the cell membrane. Functionally, transporter for bile acids. The protein is Sodium/bile acid cotransporter 4 (Slc10a4) of Mus musculus (Mouse).